A 209-amino-acid polypeptide reads, in one-letter code: Rac-like GTP-binding protein ARAC7 (209 aa).

Residue 13-20 coordinates GTP; it reads GDGAVGKT. The Effector region motif lies at 35–43; sequence YIPTVFDNF. Residues 60–64 and 118–121 contribute to the GTP site; these read DTAGQ and TKLD. S-palmitoyl cysteine attachment occurs at residues cysteine 196, cysteine 203, and cysteine 206.

The protein belongs to the small GTPase superfamily. Rho family. Post-translationally, although this sequence has a C-terminal -CXXX, it is palmitoylated at Cys-206, rather than prenylated.

It is found in the membrane. In terms of biological role, acts as a negative regulator of abscisic acid (ABA) responses. The polypeptide is Rac-like GTP-binding protein ARAC7 (ARAC7) (Arabidopsis thaliana (Mouse-ear cress)).